A 318-amino-acid chain; its full sequence is Mitochondrial coenzyme A transporter SLC25A42 (318 aa).

Solcar repeat units lie at residues 31–117 (RQVL…YKRI), 129–214 (LPPW…LKSL), and 224–312 (PYPF…MQIL). The next 6 membrane-spanning stretches (helical) occupy residues 33 to 53 (VLSS…AVAP), 89 to 109 (LWRG…IQFS), 135 to 155 (LLAG…LDLV), 186 to 206 (LYFG…LSFF), 230 to 250 (MVFG…LDVV), and 293 to 313 (LKGP…QILL).

It belongs to the mitochondrial carrier (TC 2.A.29) family. Widely expressed. Highly expressed in adipose, followed by hypothalamus and brain coronal sections containing corpus callosum, fornix, thalamus, hypothalamus, optic chiasm, pons, midbrain, and cerebellum.

Its subcellular location is the mitochondrion inner membrane. It catalyses the reaction ADP(out) + CoA(in) = ADP(in) + CoA(out). The enzyme catalyses 3'-dephospho-CoA(in) + ADP(out) = 3'-dephospho-CoA(out) + ADP(in). It carries out the reaction adenosine 3',5'-bisphosphate(in) + ADP(out) = adenosine 3',5'-bisphosphate(out) + ADP(in). The catalysed reaction is AMP(in) + ADP(out) = AMP(out) + ADP(in). It catalyses the reaction dADP(in) + ADP(out) = dADP(out) + ADP(in). The enzyme catalyses ADP(in) + ATP(out) = ADP(out) + ATP(in). In terms of biological role, mitochondrial carrier mediating the transport of coenzyme A (CoA) in mitochondria in exchange for intramitochondrial (deoxy)adenine nucleotides and adenosine 3',5'-diphosphate. This Rattus norvegicus (Rat) protein is Mitochondrial coenzyme A transporter SLC25A42 (Slc25a42).